A 162-amino-acid chain; its full sequence is NADH-quinone oxidoreductase subunit I (162 aa).

4Fe-4S ferredoxin-type domains lie at 53 to 83 and 93 to 122; these read LRRYPNGEERCIACKLCEAVCPAQAITIEAE and TRYDIDMTKCIYCGFCQEACPVDAIVEGPN. [4Fe-4S] cluster contacts are provided by cysteine 63, cysteine 66, cysteine 69, cysteine 73, cysteine 102, cysteine 105, cysteine 108, and cysteine 112.

Belongs to the complex I 23 kDa subunit family. As to quaternary structure, NDH-1 is composed of 14 different subunits. Subunits NuoA, H, J, K, L, M, N constitute the membrane sector of the complex. Requires [4Fe-4S] cluster as cofactor.

It localises to the cell inner membrane. It carries out the reaction a quinone + NADH + 5 H(+)(in) = a quinol + NAD(+) + 4 H(+)(out). Functionally, NDH-1 shuttles electrons from NADH, via FMN and iron-sulfur (Fe-S) centers, to quinones in the respiratory chain. The immediate electron acceptor for the enzyme in this species is believed to be ubiquinone. Couples the redox reaction to proton translocation (for every two electrons transferred, four hydrogen ions are translocated across the cytoplasmic membrane), and thus conserves the redox energy in a proton gradient. This Sphingopyxis alaskensis (strain DSM 13593 / LMG 18877 / RB2256) (Sphingomonas alaskensis) protein is NADH-quinone oxidoreductase subunit I.